A 330-amino-acid chain; its full sequence is MTGDDADETHENVVPGSDEDLDTPDVRGYDFSGEFDFFELLDSYATTGFQASHLADAVDITREMREDDATIYLTLTSNIVSSGLREVVAHLVRENYVDVIITTSGSLTEDIIKTAKPFKMGEWDVDEAALREEGINRLGNIFVPSDRYVWLEEYLYDFFEEFFADQKVRTPTAFARELGATLDDEDSILKNAADNDIPVFCPALTDAEIGNFLYYYRQGYDSEVGIEILDDYDALIEEGLLADTTGLICVGAGVPKHHAIMTNLFRGGADYAVYISTGMEGDGSLSGAPPEEAVSWGKIKDEDAEPNYALIEAEATLVFPLLVAGAFENP.

Residues 1–25 form a disordered region; the sequence is MTGDDADETHENVVPGSDEDLDTPD. Lys298 serves as the catalytic Nucleophile.

Belongs to the deoxyhypusine synthase family. NAD(+) is required as a cofactor.

The enzyme catalyses [eIF5A protein]-L-lysine + spermidine = [eIF5A protein]-deoxyhypusine + propane-1,3-diamine. The protein operates within protein modification; eIF5A hypusination. Catalyzes the NAD-dependent oxidative cleavage of spermidine and the subsequent transfer of the butylamine moiety of spermidine to the epsilon-amino group of a specific lysine residue of the eIF-5A precursor protein to form the intermediate deoxyhypusine residue. This chain is Probable deoxyhypusine synthase, found in Halobacterium salinarum (strain ATCC 29341 / DSM 671 / R1).